We begin with the raw amino-acid sequence, 490 residues long: Cytochrome P450 2C54 (490 aa).

Serine 127 carries the post-translational modification Phosphoserine. Lysine 252 and lysine 375 each carry N6-acetyllysine. A heme-binding site is contributed by cysteine 435.

It belongs to the cytochrome P450 family. Heme serves as cofactor. In terms of tissue distribution, expressed in liver.

Its subcellular location is the endoplasmic reticulum membrane. The protein localises to the microsome membrane. The enzyme catalyses an organic molecule + reduced [NADPH--hemoprotein reductase] + O2 = an alcohol + oxidized [NADPH--hemoprotein reductase] + H2O + H(+). In terms of biological role, metabolizes arachidonic acid mainly to 12-hydroxyeicosatetraenoic acid (HETE). The protein is Cytochrome P450 2C54 of Mus musculus (Mouse).